The primary structure comprises 271 residues: MYDRIGGSSTRTSQTDEPSQSVDSGSFTETLADLAPQWSSRSGELPDKMGACCSKPDTLDANVQTSSASEPSTSSPESPATSLFEYRTADLRDANVDGICVGLTAEWFRNLSNSPSTRMSALTPGSQTHASAAERQQQYQRLKDQLRSRGAGSSQADLQAQNTILEEAGLEPAGEEKRFAFGKSSNVKSMVNEINEDGSNHLLSLYFAEGGAHTVATSASNGTTTLFDPNYGEFTVRSDPDQMASLLQSLANRYRNPNGQHLSTITTQRMQ.

Residues 1–81 (MYDRIGGSST…STSSPESPAT (81 aa)) form a disordered region. Residues 7–29 (GSSTRTSQTDEPSQSVDSGSFTE) show a composition bias toward polar residues. Residues 65–81 (TSSASEPSTSSPESPAT) are compositionally biased toward low complexity. C100 is an active-site residue. Residues 114-136 (SPSTRMSALTPGSQTHASAAERQ) form a disordered region. Residues H213 and D228 contribute to the active site.

The protein belongs to the peptidase C58 family.

In terms of biological role, potential cysteine protease, which may play a central role after invasion of host cell. The chain is Putative cysteine protease YopT-like blr2140 from Bradyrhizobium diazoefficiens (strain JCM 10833 / BCRC 13528 / IAM 13628 / NBRC 14792 / USDA 110).